Here is a 210-residue protein sequence, read N- to C-terminus: Large ribosomal subunit protein uL3 (210 aa).

A disordered region spans residues 126–152 (HGFRGGPKTHGQSDRHRAPGSIGAGTT).

Belongs to the universal ribosomal protein uL3 family. Part of the 50S ribosomal subunit. Forms a cluster with proteins L14 and L19.

Its function is as follows. One of the primary rRNA binding proteins, it binds directly near the 3'-end of the 23S rRNA, where it nucleates assembly of the 50S subunit. This Chloroflexus aurantiacus (strain ATCC 29366 / DSM 635 / J-10-fl) protein is Large ribosomal subunit protein uL3.